A 353-amino-acid chain; its full sequence is Photosystem II D2 protein (353 aa).

Thr2 is modified (N-acetylthreonine). Residue Thr2 is modified to Phosphothreonine. Residues 41-61 traverse the membrane as a helical segment; the sequence is CAYFALGGWFTGTTFVTSWYT. Position 118 (His118) interacts with chlorophyll a. A helical transmembrane segment spans residues 125–141; that stretch reads GFMLRQFELARSVQLRP. Pheophytin a contacts are provided by Gln130 and Asn143. Residues 153–166 form a helical membrane-spanning segment; it reads VFVSVFLIYPLGQS. His198 contributes to the chlorophyll a binding site. The chain crosses the membrane as a helical span at residues 208–228; the sequence is AALLCAIHGATVENTLFEDGD. The a plastoquinone site is built by His215 and Phe262. Residue His215 coordinates Fe cation. His269 is a Fe cation binding site. The helical transmembrane segment at 279-295 threads the bilayer; that stretch reads GLWMSALGVVGLALNLR.

This sequence belongs to the reaction center PufL/M/PsbA/D family. As to quaternary structure, PSII is composed of 1 copy each of membrane proteins PsbA, PsbB, PsbC, PsbD, PsbE, PsbF, PsbH, PsbI, PsbJ, PsbK, PsbL, PsbM, PsbT, PsbX, PsbY, PsbZ, Psb30/Ycf12, at least 3 peripheral proteins of the oxygen-evolving complex and a large number of cofactors. It forms dimeric complexes. The D1/D2 heterodimer binds P680, chlorophylls that are the primary electron donor of PSII, and subsequent electron acceptors. It shares a non-heme iron and each subunit binds pheophytin, quinone, additional chlorophylls, carotenoids and lipids. There is also a Cl(-1) ion associated with D1 and D2, which is required for oxygen evolution. The PSII complex binds additional chlorophylls, carotenoids and specific lipids. is required as a cofactor.

The protein localises to the plastid. The protein resides in the chloroplast thylakoid membrane. It catalyses the reaction 2 a plastoquinone + 4 hnu + 2 H2O = 2 a plastoquinol + O2. In terms of biological role, photosystem II (PSII) is a light-driven water:plastoquinone oxidoreductase that uses light energy to abstract electrons from H(2)O, generating O(2) and a proton gradient subsequently used for ATP formation. It consists of a core antenna complex that captures photons, and an electron transfer chain that converts photonic excitation into a charge separation. The D1/D2 (PsbA/PsbD) reaction center heterodimer binds P680, the primary electron donor of PSII as well as several subsequent electron acceptors. D2 is needed for assembly of a stable PSII complex. The chain is Photosystem II D2 protein from Ranunculus macranthus (Large buttercup).